Reading from the N-terminus, the 108-residue chain is MFAVIKTGSKQYRVAKDSIIKIEKIDGEPGSTIEFKEVLMIGEYSKPSFIGTPIVKGASVTAQILNQLRNQKVIVFKKKRRKNYRNKRGHKQEVTQVKIIDIAKASNC.

Belongs to the bacterial ribosomal protein bL21 family. Part of the 50S ribosomal subunit. Contacts protein L20.

This protein binds to 23S rRNA in the presence of protein L20. This chain is Large ribosomal subunit protein bL21, found in Orientia tsutsugamushi (strain Ikeda) (Rickettsia tsutsugamushi).